The chain runs to 192 residues: Aminodeoxychorismate synthase component 2 (192 aa).

A Glutamine amidotransferase type-1 domain is found at 3–192 (SVLMIDNCDS…LANLIHRPCH (190 aa)). Catalysis depends on residues C83, H170, and E172.

Monomer. Heterodimer consisting of two non-identical subunits: a glutamine amidotransferase subunit (PabA) and a aminodeoxychorismate synthase subunit (PabB).

The enzyme catalyses chorismate + L-glutamine = 4-amino-4-deoxychorismate + L-glutamate. Its pathway is cofactor biosynthesis; tetrahydrofolate biosynthesis; 4-aminobenzoate from chorismate: step 1/2. In terms of biological role, part of a heterodimeric complex that catalyzes the two-step biosynthesis of 4-amino-4-deoxychorismate (ADC), a precursor of p-aminobenzoate (PABA) and tetrahydrofolate. In the first step, a glutamine amidotransferase (PabA) generates ammonia as a substrate that, along with chorismate, is used in the second step, catalyzed by aminodeoxychorismate synthase (PabB) to produce ADC. PabA converts glutamine into glutamate only in the presence of stoichiometric amounts of PabB. This is Aminodeoxychorismate synthase component 2 from Streptomyces lividans.